A 223-amino-acid polypeptide reads, in one-letter code: Keratin-associated protein 5-4 (223 aa).

14 consecutive repeat copies span residues 21–24 (CCKP), 27–30 (CCVP), 79–82 (CCKP), 89–92 (CCKP), 107–110 (CCKP), 117–120 (CCKP), 135–138 (CCKP), 145–148 (CCKP), 155–158 (CCKP), 173–176 (CCKP), 183–186 (CCKP), 193–196 (CCKP), 203–206 (CCKP), and 213–216 (CCAP). A 14 X 4 AA repeats of C-C-X-P region spans residues 21 to 216 (CCKPVCCCVP…CCCQSSCCAP (196 aa)).

It belongs to the KRTAP type 5 family. In terms of assembly, interacts with hair keratins. In terms of tissue distribution, expressed during the active phases of the hair cycle in the medulla and the inner root sheath of the forming hair. Also expressed in the upper layers of the epidermis of skin.

Its function is as follows. In the hair cortex, hair keratin intermediate filaments are embedded in an interfilamentous matrix, consisting of hair keratin-associated protein (KRTAP), which are essential for the formation of a rigid and resistant hair shaft through their extensive disulfide bond cross-linking with abundant cysteine residues of hair keratins. The matrix proteins include the high-sulfur and high-glycine-tyrosine keratins. This is Keratin-associated protein 5-4 from Mus musculus (Mouse).